A 515-amino-acid chain; its full sequence is MFSLILLAVTLLTLAWFYLKRHYEYWERRGFPFEKHSGIPFGCLDSVWRQEKSMGLAIYDVYVKSKERVLGIYLLFRPAVLIRDADLARRVLAQDFASFHDRGVYVDEERDPLSANIFSLRGQSWRSMRHMLSPCFTSGKLKSMFSTSEDIGDKMVAHLQKELPEEGFKEVDIKKVMQNYAIDIIASTIFGLDVNSFENPDNKFRKLVSLARANNRFNAMFGMMIFLVPSIAQFLFRIGFKNPVGLAMLQIVKETVEYREKHGIVRKDLLQLLIQLRNTGKIDENDEKSFSIQKTPDGHIKTISLEAITAQAFIFYIAGQETTGSTAAFTIYELAQYPELLKRLQDEVDETLAKNDGKITYDSLNKMEFLDLCVQETIRKYPGLPILNRECTQDYTVPDTNHVIPKGTPVVISLYGIHHDAEYFPDPETYDPERFSEESRNYNPTAFMPFGEGPRICIAQRMGRINSKLAIIKILQNFNVEVMSRSEIEFENSGIALIPKHGVRVRLSKRVPKLS.

Residue Cys-457 coordinates heme.

Belongs to the cytochrome P450 family. Heme serves as cofactor.

It is found in the endoplasmic reticulum membrane. The protein resides in the microsome membrane. In terms of biological role, may be involved in the metabolism of insect hormones and in the breakdown of synthetic insecticides. This chain is Probable cytochrome P450 6d4 (Cyp6d4), found in Drosophila melanogaster (Fruit fly).